A 328-amino-acid polypeptide reads, in one-letter code: Probable cell division protein WhiA (328 aa).

Residues S276–S309 constitute a DNA-binding region (H-T-H motif).

The protein belongs to the WhiA family.

Involved in cell division and chromosome segregation. This chain is Probable cell division protein WhiA, found in Corynebacterium diphtheriae (strain ATCC 700971 / NCTC 13129 / Biotype gravis).